The following is a 338-amino-acid chain: Formamidase (338 aa).

The CN hydrolase domain occupies 14–260 (LLIAAIQYPV…WEIVTAELFP (247 aa)). Residue glutamate 60 is the Proton acceptor of the active site. The Proton donor role is filled by lysine 133. The Nucleophile role is filled by cysteine 166.

Belongs to the carbon-nitrogen hydrolase superfamily. Aliphatic amidase family.

The enzyme catalyses formamide + H2O = formate + NH4(+). Functionally, is an aliphatic amidase with a restricted substrate specificity, as it only hydrolyzes formamide. The sequence is that of Formamidase from Photorhabdus laumondii subsp. laumondii (strain DSM 15139 / CIP 105565 / TT01) (Photorhabdus luminescens subsp. laumondii).